The chain runs to 41 residues: Large ribosomal subunit protein bL36 (41 aa).

Belongs to the bacterial ribosomal protein bL36 family.

The polypeptide is Large ribosomal subunit protein bL36 (Rickettsia africae (strain ESF-5)).